We begin with the raw amino-acid sequence, 297 residues long: Aspartate carbamoyltransferase catalytic subunit (297 aa).

Positions 51 and 52 each coordinate carbamoyl phosphate. Position 79 (Lys-79) interacts with L-aspartate. Carbamoyl phosphate is bound by residues Arg-101, His-130, and Gln-133. The L-aspartate site is built by Arg-163 and Arg-215. Carbamoyl phosphate is bound by residues Gly-256 and Pro-257.

The protein belongs to the aspartate/ornithine carbamoyltransferase superfamily. ATCase family. Heterododecamer (2C3:3R2) of six catalytic PyrB chains organized as two trimers (C3), and six regulatory PyrI chains organized as three dimers (R2).

It carries out the reaction carbamoyl phosphate + L-aspartate = N-carbamoyl-L-aspartate + phosphate + H(+). The protein operates within pyrimidine metabolism; UMP biosynthesis via de novo pathway; (S)-dihydroorotate from bicarbonate: step 2/3. In terms of biological role, catalyzes the condensation of carbamoyl phosphate and aspartate to form carbamoyl aspartate and inorganic phosphate, the committed step in the de novo pyrimidine nucleotide biosynthesis pathway. In Ehrlichia ruminantium (strain Gardel), this protein is Aspartate carbamoyltransferase catalytic subunit.